Here is a 391-residue protein sequence, read N- to C-terminus: Nucleosome assembly protein 1-like 1 (391 aa).

Over residues 1–10 the composition is skewed to basic and acidic residues; sequence MADIDNKEQS. Residues 1 to 32 are disordered; that stretch reads MADIDNKEQSELDQDLEDVEEVEEEETGEETK. The residue at position 2 (Ala-2) is an N-acetylalanine. Ser-10 is subject to Phosphoserine. The segment covering 11–28 has biased composition (acidic residues); sequence ELDQDLEDVEEVEEEETG. Phosphothreonine occurs at positions 62 and 64. Residue Ser-69 is modified to Phosphoserine. Lys-116 is modified (N6-acetyllysine). Residues 125-150 carry the NAP1L motif motif; sequence YEPTEEECEWKPDEEDEVSEELKEKA. A compositionally biased stretch (acidic residues) spans 131–143; it reads ECEWKPDEEDEVS. The segment at 131–163 is disordered; it reads ECEWKPDEEDEVSEELKEKAKIEDEKKDEEKED. A Phosphoserine modification is found at Ser-143. Basic and acidic residues predominate over residues 144–163; that stretch reads EELKEKAKIEDEKKDEEKED. The Nuclear localization signal motif lies at 273 to 279; sequence IKKKQKH. Residues 346 to 376 are compositionally biased toward acidic residues; the sequence is AIEDDDDDYDEEGEEADEEGEEEGDEENDPD. A disordered region spans residues 346-391; it reads AIEDDDDDYDEEGEEADEEGEEEGDEENDPDYDPKKDQNPAECKQQ. Residues Glu-359 and Glu-360 each carry the 5-glutamyl polyglycine modification. Positions 377–391 are enriched in basic and acidic residues; sequence YDPKKDQNPAECKQQ. Cys-388 carries the post-translational modification Cysteine methyl ester. The S-farnesyl cysteine moiety is linked to residue Cys-388. Residues 389–391 constitute a propeptide, removed in mature form; that stretch reads KQQ.

The protein belongs to the nucleosome assembly protein (NAP) family. Homodimer. The dimer binds strongly and sequentially to single and double H2A-H2B heterodimers. Interacts with ERCC6; this interaction increases ERCC6 processivity. Interacts with RAD54. Interacts with SETD1A. Polyglycylated by TTLL10 on glutamate residues, resulting in polyglycine chains on the gamma-carboxyl group. Both polyglutamylation and polyglycylation modifications can coexist on the same protein on adjacent residues, and lowering polyglycylation levels increases polyglutamylation, and reciprocally. Post-translationally, polyglutamylated by TTLL4 on glutamate residues, resulting in polyglutamate chains on the gamma-carboxyl group. Both polyglutamylation and polyglycylation modifications can coexist on the same protein on adjacent residues, and lowering polyglycylation levels increases polyglutamylation, and reciprocally. As to expression, highly expressed in the brain (at protein level). High expression in cerebral cortex, not in cerebellar cortex.

The protein localises to the nucleus. The protein resides in the cytoplasm. It localises to the melanosome. Its function is as follows. Histone chaperone that plays a role in the nuclear import of H2A-H2B and nucleosome assembly. Also participates in several important DNA repair mechanisms: greatly enhances ERCC6-mediated chromatin remodeling which is essential for transcription-coupled nucleotide excision DNA repair. Also stimulates homologous recombination (HR) by RAD51 and RAD54 which is essential in mitotic DNA double strand break (DSB) repair. Plays a key role in the regulation of embryonic neurogenesis. Promotes the proliferation of neural progenitors and inhibits neuronal differentiation during cortical development. Regulates neurogenesis via the modulation of RASSF10; regulates RASSF10 expression by promoting SETD1A-mediated H3K4 methylation at the RASSF10 promoter. The chain is Nucleosome assembly protein 1-like 1 (Nap1l1) from Mus musculus (Mouse).